Here is a 446-residue protein sequence, read N- to C-terminus: Keratin, type I cytoskeletal 25 (446 aa).

The segment at 1-20 (MSLRLSSGSKRSYARPSTGS) is disordered. A head region spans residues 1–74 (MSLRLSSGSK…VNEGGLLSGN (74 aa)). Residues 75–110 (EKVTMQNLNDRLASYLDNVQALQEANADLEQKIKGW) are coil 1A. The region spanning 75-390 (EKVTMQNLND…LLIGGDEGAC (316 aa)) is the IF rod domain. Positions 111–132 (YEKFGPGSCRGLDHDYSRYFPI) are linker 1. Residues 133–224 (IDDLKNQIIT…KNHKEEMQAL (92 aa)) form a coil 1B region. The interval 225-247 (QCAAGGNVNVEMNAAPGVDLTVL) is linker 12. The segment at 248 to 386 (LNNMRAEYEA…ETYCLLIGGD (139 aa)) is coil 2. A tail region spans residues 387–446 (EGACKSSSYKSKDYTSGNAGNQSKDSPKAIVVKKVLEEVDQRSKILTTRLHSLEEKSQSN). The tract at residues 394-413 (SYKSKDYTSGNAGNQSKDSP) is disordered. Positions 400 to 410 (YTSGNAGNQSK) are enriched in polar residues. A Phosphoserine modification is found at serine 438.

The protein belongs to the intermediate filament family. Heterodimer of a type I and a type II keratin. Heterodimer with type II keratin KRT5 leading to the formation of keratin intermediate filament (KIF) network. Interacts with KRT6A to form filaments.

It localises to the cytoplasm. Essential for the proper assembly of type I and type II keratin protein complexes and formation of keratin intermediate filaments in the inner root sheath (irs). Plays a role in the cytoskeleton organization. This is Keratin, type I cytoskeletal 25 from Rattus norvegicus (Rat).